Here is a 432-residue protein sequence, read N- to C-terminus: Serine hydroxymethyltransferase (432 aa).

Residues Leu131 and 135–137 (GHL) contribute to the (6S)-5,6,7,8-tetrahydrofolate site. Position 240 is an N6-(pyridoxal phosphate)lysine (Lys240).

Belongs to the SHMT family. In terms of assembly, homodimer. The cofactor is pyridoxal 5'-phosphate.

It localises to the cytoplasm. The enzyme catalyses (6R)-5,10-methylene-5,6,7,8-tetrahydrofolate + glycine + H2O = (6S)-5,6,7,8-tetrahydrofolate + L-serine. It functions in the pathway one-carbon metabolism; tetrahydrofolate interconversion. The protein operates within amino-acid biosynthesis; glycine biosynthesis; glycine from L-serine: step 1/1. In terms of biological role, catalyzes the reversible interconversion of serine and glycine with tetrahydrofolate (THF) serving as the one-carbon carrier. This reaction serves as the major source of one-carbon groups required for the biosynthesis of purines, thymidylate, methionine, and other important biomolecules. Also exhibits THF-independent aldolase activity toward beta-hydroxyamino acids, producing glycine and aldehydes, via a retro-aldol mechanism. This Acidiphilium cryptum (strain JF-5) protein is Serine hydroxymethyltransferase.